A 1296-amino-acid polypeptide reads, in one-letter code: Protein STU1 (1296 aa).

Disordered stretches follow at residues 258-287 (ATSA…HGAD), 735-793 (LSQT…PPVT), 888-946 (ALQQ…HISA), and 953-972 (TTSH…TNGV). Positions 277–287 (RSQFNSSHGAD) are enriched in polar residues. Low complexity-rich tracts occupy residues 755–782 (SARS…GAAS), 900–919 (TIST…ASAS), and 933–946 (HSPS…HISA). Polar residues predominate over residues 953–964 (TTSHRVLSSTPS).

This sequence belongs to the CLASP family. As to quaternary structure, interacts with microtubules.

It localises to the cytoplasm. The protein localises to the cytoskeleton. It is found in the nucleus. The protein resides in the spindle. Its function is as follows. Microtubule binding protein that promotes the stabilization of dynamic microtubules. Required for mitotic spindle formation. This chain is Protein STU1 (STU1), found in Mycosarcoma maydis (Corn smut fungus).